The sequence spans 674 residues: YAP1-binding protein 1 (674 aa).

Belongs to the YBP1 family. Interacts with YAP1. Forms a peroxide stress induced complex with YAP1 in the cytoplasm. Systematic proteome-wide 2-hybrid interaction studies suggest that YAP1, HYR1/GPX3, and YBP1 all interact with the nuclear pore complex subunit NUP116, which is involved in nucleocytoplasmic transport.

The protein localises to the cytoplasm. Involved in oxidative stress response and redox homeostasis. Required for hydrogen peroxide-induced oxidation and nuclear localization (activation) of YAP1. Functions probably in concert with HYP1/GPX3, the actual YAP1 modifying enzyme. YBP1 is not required for HYP1/GPX3-independent, diamide-induced oxidation of YAP1. This is YAP1-binding protein 1 from Saccharomyces cerevisiae (strain ATCC 204508 / S288c) (Baker's yeast).